Consider the following 156-residue polypeptide: MPRKGPVPKRDVLPDPLYKSKLVTRLINQIMVDGKRGKAQKILYNAFELVAERSGQNAMEVFEQAMKNVMPVLEVRARRVGGSNYQVPVEVRPERRQALGLRYIVNYSRLRGEKTMEERLANEILDASNNTGAAVKRREDMHKMAEANKAFAHYRW.

It belongs to the universal ribosomal protein uS7 family. As to quaternary structure, part of the 30S ribosomal subunit. Contacts proteins S9 and S11.

In terms of biological role, one of the primary rRNA binding proteins, it binds directly to 16S rRNA where it nucleates assembly of the head domain of the 30S subunit. Is located at the subunit interface close to the decoding center, probably blocks exit of the E-site tRNA. This Oceanobacillus iheyensis (strain DSM 14371 / CIP 107618 / JCM 11309 / KCTC 3954 / HTE831) protein is Small ribosomal subunit protein uS7.